The following is a 291-amino-acid chain: uncharacterized protein (291 aa).

The interval 1 to 82 (MEAEKETEQE…SYSSSPFETH (82 aa)) is disordered. Composition is skewed to low complexity over residues 28 to 43 (HSHSMSSPIHSSISAS) and 59 to 78 (STSSSSSSSSSPLTSYSSSP).

This is an uncharacterized protein from Arabidopsis thaliana (Mouse-ear cress).